A 279-amino-acid chain; its full sequence is Shikimate dehydrogenase (NADP(+)) (279 aa).

Shikimate contacts are provided by residues Ser-20–Ser-22 and Thr-67. Lys-71 serves as the catalytic Proton acceptor. Asp-83 lines the NADP(+) pocket. Shikimate contacts are provided by Asn-92 and Asp-108. Residues Gly-134 to Ala-138 and Leu-223 each bind NADP(+). Tyr-225 provides a ligand contact to shikimate. Position 246 (Gly-246) interacts with NADP(+).

Belongs to the shikimate dehydrogenase family. As to quaternary structure, homodimer.

It carries out the reaction shikimate + NADP(+) = 3-dehydroshikimate + NADPH + H(+). It participates in metabolic intermediate biosynthesis; chorismate biosynthesis; chorismate from D-erythrose 4-phosphate and phosphoenolpyruvate: step 4/7. In terms of biological role, involved in the biosynthesis of the chorismate, which leads to the biosynthesis of aromatic amino acids. Catalyzes the reversible NADPH linked reduction of 3-dehydroshikimate (DHSA) to yield shikimate (SA). This chain is Shikimate dehydrogenase (NADP(+)), found in Cereibacter sphaeroides (strain KD131 / KCTC 12085) (Rhodobacter sphaeroides).